The sequence spans 583 residues: 2-succinyl-5-enolpyruvyl-6-hydroxy-3-cyclohexene-1-carboxylate synthase (583 aa).

This sequence belongs to the TPP enzyme family. MenD subfamily. As to quaternary structure, homodimer. Mg(2+) is required as a cofactor. The cofactor is Mn(2+). Requires thiamine diphosphate as cofactor.

It catalyses the reaction isochorismate + 2-oxoglutarate + H(+) = 5-enolpyruvoyl-6-hydroxy-2-succinyl-cyclohex-3-ene-1-carboxylate + CO2. It functions in the pathway quinol/quinone metabolism; 1,4-dihydroxy-2-naphthoate biosynthesis; 1,4-dihydroxy-2-naphthoate from chorismate: step 2/7. The protein operates within quinol/quinone metabolism; menaquinone biosynthesis. Its function is as follows. Catalyzes the thiamine diphosphate-dependent decarboxylation of 2-oxoglutarate and the subsequent addition of the resulting succinic semialdehyde-thiamine pyrophosphate anion to isochorismate to yield 2-succinyl-5-enolpyruvyl-6-hydroxy-3-cyclohexene-1-carboxylate (SEPHCHC). The chain is 2-succinyl-5-enolpyruvyl-6-hydroxy-3-cyclohexene-1-carboxylate synthase from Chlorobaculum parvum (strain DSM 263 / NCIMB 8327) (Chlorobium vibrioforme subsp. thiosulfatophilum).